A 128-amino-acid polypeptide reads, in one-letter code: Ribonuclease P protein component (128 aa).

Belongs to the RnpA family. As to quaternary structure, consists of a catalytic RNA component (M1 or rnpB) and a protein subunit.

It catalyses the reaction Endonucleolytic cleavage of RNA, removing 5'-extranucleotides from tRNA precursor.. Its function is as follows. RNaseP catalyzes the removal of the 5'-leader sequence from pre-tRNA to produce the mature 5'-terminus. It can also cleave other RNA substrates such as 4.5S RNA. The protein component plays an auxiliary but essential role in vivo by binding to the 5'-leader sequence and broadening the substrate specificity of the ribozyme. The chain is Ribonuclease P protein component from Prochlorococcus marinus (strain MIT 9303).